We begin with the raw amino-acid sequence, 370 residues long: 3-dehydroquinate synthase (370 aa).

Residues 112–116, 136–137, Lys-149, Lys-158, and 176–179 contribute to the NAD(+) site; these read GVVGD, TS, and TLRT. Glu-191, His-254, and His-276 together coordinate Zn(2+).

It belongs to the sugar phosphate cyclases superfamily. Dehydroquinate synthase family. Requires Co(2+) as cofactor. The cofactor is Zn(2+). NAD(+) is required as a cofactor.

It is found in the cytoplasm. It carries out the reaction 7-phospho-2-dehydro-3-deoxy-D-arabino-heptonate = 3-dehydroquinate + phosphate. Its pathway is metabolic intermediate biosynthesis; chorismate biosynthesis; chorismate from D-erythrose 4-phosphate and phosphoenolpyruvate: step 2/7. Its function is as follows. Catalyzes the conversion of 3-deoxy-D-arabino-heptulosonate 7-phosphate (DAHP) to dehydroquinate (DHQ). The polypeptide is 3-dehydroquinate synthase (Xanthomonas oryzae pv. oryzae (strain PXO99A)).